A 333-amino-acid polypeptide reads, in one-letter code: S-adenosylmethionine decarboxylase proenzyme (333 aa).

Residue Phe7 participates in substrate binding. Catalysis depends on residues Glu8 and Glu11. Substrate is bound at residue Glu67. Residue Ser68 is the Schiff-base intermediate with substrate; via pyruvic acid of the active site. Pyruvic acid (Ser); by autocatalysis is present on Ser68. Cys82 serves as the catalytic Proton donor; for catalytic activity. Residue Phe223 participates in substrate binding. Active-site proton acceptor; for processing activity residues include Ser229 and His243. Substrate is bound at residue Glu247. Ser298 carries the post-translational modification Phosphoserine.

It belongs to the eukaryotic AdoMetDC family. In terms of assembly, heterotetramer of two alpha and two beta chains. Requires pyruvate as cofactor. Post-translationally, is synthesized initially as an inactive proenzyme. Formation of the active enzyme involves a self-maturation process in which the active site pyruvoyl group is generated from an internal serine residue via an autocatalytic post-translational modification. Two non-identical subunits are generated from the proenzyme in this reaction, and the pyruvate is formed at the N-terminus of the alpha chain, which is derived from the carboxyl end of the proenzyme. The post-translation cleavage follows an unusual pathway, termed non-hydrolytic serinolysis, in which the side chain hydroxyl group of the serine supplies its oxygen atom to form the C-terminus of the beta chain, while the remainder of the serine residue undergoes an oxidative deamination to produce ammonia and the pyruvoyl group blocking the N-terminus of the alpha chain.

It carries out the reaction S-adenosyl-L-methionine + H(+) = S-adenosyl 3-(methylsulfanyl)propylamine + CO2. The protein operates within amine and polyamine biosynthesis; S-adenosylmethioninamine biosynthesis; S-adenosylmethioninamine from S-adenosyl-L-methionine: step 1/1. Essential for biosynthesis of the polyamines spermidine and spermine. Promotes maintenance and self-renewal of embryonic stem cells, by maintaining spermine levels. The sequence is that of S-adenosylmethionine decarboxylase proenzyme (Amd1) from Rattus norvegicus (Rat).